Consider the following 331-residue polypeptide: Hyaluronidase B (331 aa).

2 cysteine pairs are disulfide-bonded: cysteine 19–cysteine 308 and cysteine 185–cysteine 197. Residue asparagine 79 is glycosylated (N-linked (GlcNAc...) asparagine). Glutamate 109 acts as the Proton donor in catalysis.

This sequence belongs to the glycosyl hydrolase 56 family. As to expression, expressed by the venom gland.

It localises to the secreted. It catalyses the reaction Random hydrolysis of (1-&gt;4)-linkages between N-acetyl-beta-D-glucosamine and D-glucuronate residues in hyaluronate.. In terms of biological role, hydrolyzes high molecular weight hyaluronic acid to produce small oligosaccharides. The chain is Hyaluronidase B from Vespa velutina (Asian yellow-legged hornet).